The primary structure comprises 253 residues: Glutamate racemase (253 aa).

Substrate contacts are provided by residues D7 to S8 and Y39 to G40. The active-site Proton donor/acceptor is the C70. N71–T72 is a binding site for substrate. C180 (proton donor/acceptor) is an active-site residue. A substrate-binding site is contributed by T181–H182.

This sequence belongs to the aspartate/glutamate racemases family.

It carries out the reaction L-glutamate = D-glutamate. Its pathway is cell wall biogenesis; peptidoglycan biosynthesis. Provides the (R)-glutamate required for cell wall biosynthesis. The polypeptide is Glutamate racemase (Halothermothrix orenii (strain H 168 / OCM 544 / DSM 9562)).